Here is a 494-residue protein sequence, read N- to C-terminus: Potassium voltage-gated channel subfamily A member 2 (494 aa).

Positions 1–25 (MTVATGDPSDEAAAHPGNPAEYDPD) are disordered. The tract at residues 1–124 (MTVATGDPSD…YELGDEAIEL (124 aa)) is tetramerization domain. The Cytoplasmic portion of the chain corresponds to 1–159 (MTVATGDPSD…LLFEYPESSG (159 aa)). Residues 160–181 (PARIIAIISVMVILISIVSFCL) form a helical membrane-spanning segment. Residues 182–216 (ETLPIFRNDDDEPHSVFDTNTNTTIYFTSTYFTDP) lie on the Extracellular side of the membrane. The N-linked (GlcNAc...) asparagine glycan is linked to N203. The chain crosses the membrane as a helical span at residues 217–238 (FFILETLCIIWFSFEFLVRLFA). A lipid anchor (S-palmitoyl cysteine) is attached at C239. Residues 239–249 (CPSKSGFFGNV) lie on the Cytoplasmic side of the membrane. A helical membrane pass occupies residues 250–270 (MNIIDVVAIIPYFITLATELA). Topologically, residues 271–284 (EKPEDGQAGQQAMS) are extracellular. A helical; Voltage-sensor transmembrane segment spans residues 285–305 (LAILRVIRLVRVFRIFKLSRH). The Cytoplasmic portion of the chain corresponds to 306–320 (SKGLQILGQTLKASM). Residues 307-320 (KGLQILGQTLKASM) form an S4-S5 linker region. The helical transmembrane segment at 321–342 (RELGLLIFFLFIGVILFSSAVY) threads the bilayer. The Extracellular portion of the chain corresponds to 343–356 (FAEADEPESQFESI). The helical intramembrane region spans 357 to 368 (PDAFWWAVVSMT). Residues 369–374 (TVGYGD) carry the Selectivity filter motif. An intramembrane segment occupies 369 to 376 (TVGYGDMV). At 377–383 (PTTIGGK) the chain is on the extracellular side. The helical transmembrane segment at 384-412 (IVGSLCAIAGVLTIALPVPVIVSNFNYFY) threads the bilayer. Residues 413-494 (HRETEGEEQA…VNITKMLTDV (82 aa)) are Cytoplasmic-facing. Residues 492-494 (TDV) carry the PDZ-binding motif.

It belongs to the potassium channel family. A (Shaker) (TC 1.A.1.2) subfamily. Kv1.2/KCNA2 sub-subfamily. Homotetramer and heterotetramer with other family members. As to expression, expressed in oligodendrocytes.

It is found in the cell membrane. The enzyme catalyses K(+)(in) = K(+)(out). Functionally, voltage-gated potassium channel that mediates transmembrane potassium transport in excitable membranes, primarily in the brain and central nervous system. Prevents aberrant action potential firing and regulates neuronal output. Forms tetrameric potassium-selective channels through which potassium ions pass in accordance with their electrochemical gradient. The channel alternates between opened and closed conformations in response to the voltage difference across the membrane. Can form functional homotetrameric channels and heterotetrameric channels with other family members; the channels characteristics depend critically on the types of channel-forming alpha subunits that are present. Channel properties are modulated by cytoplasmic beta subunits that regulate the subcellular location of the alpha subunits. In vivo, membranes probably contain a mixture of heteromeric potassium channel complexes, making it difficult to assign currents observed in intact tissues to any particular potassium channel family member. Homotetrameric KCNA2 forms a delayed-rectifier potassium channel that opens in response to membrane depolarization, followed by slow spontaneous channel closure. Regulates neuronal excitability and plays a role as pacemaker in the regulation of neuronal action potentials. KCNA2-containing channels play a presynaptic role and prevent hyperexcitability and aberrant action potential firing. Response to toxins that are selective for KCNA2-containing potassium channels suggests that in Purkinje cells, dendritic subthreshold KCNA2-containing potassium channels prevent random spontaneous calcium spikes, suppressing dendritic hyperexcitability without hindering the generation of somatic action potentials, and thereby play an important role in motor coordination. Plays a role in the induction of long-term potentiation of neuron excitability in the CA3 layer of the hippocampus. This chain is Potassium voltage-gated channel subfamily A member 2 (kcna2), found in Oncorhynchus mykiss (Rainbow trout).